The sequence spans 545 residues: Membrane protein insertase YidC (545 aa).

Transmembrane regions (helical) follow at residues 350–370, 424–444, 461–481, and 498–518; these read IIGN…AVLY, LPML…FASV, ADPY…QTYL, and PLVF…YWVV.

The protein belongs to the OXA1/ALB3/YidC family. Type 1 subfamily. In terms of assembly, interacts with the Sec translocase complex via SecD. Specifically interacts with transmembrane segments of nascent integral membrane proteins during membrane integration.

It localises to the cell inner membrane. In terms of biological role, required for the insertion and/or proper folding and/or complex formation of integral membrane proteins into the membrane. Involved in integration of membrane proteins that insert both dependently and independently of the Sec translocase complex, as well as at least some lipoproteins. Aids folding of multispanning membrane proteins. The chain is Membrane protein insertase YidC from Neisseria meningitidis serogroup C (strain 053442).